A 107-amino-acid chain; its full sequence is uncharacterized protein (107 aa).

This sequence belongs to the HesB/IscA family.

This is an uncharacterized protein from Azotobacter vinelandii.